The primary structure comprises 89 residues: Small ribosomal subunit protein uS15 (89 aa).

Belongs to the universal ribosomal protein uS15 family. In terms of assembly, part of the 30S ribosomal subunit. Forms a bridge to the 50S subunit in the 70S ribosome, contacting the 23S rRNA.

One of the primary rRNA binding proteins, it binds directly to 16S rRNA where it helps nucleate assembly of the platform of the 30S subunit by binding and bridging several RNA helices of the 16S rRNA. Functionally, forms an intersubunit bridge (bridge B4) with the 23S rRNA of the 50S subunit in the ribosome. The protein is Small ribosomal subunit protein uS15 of Limosilactobacillus reuteri (strain DSM 20016) (Lactobacillus reuteri).